The primary structure comprises 323 residues: Germacrene A synthase (323 aa).

Asp-82, Asp-86, Asn-222, Ser-226, and Glu-230 together coordinate Mg(2+). Residues 82 to 86 (DDQCD) carry the DDXXD motif motif.

This sequence belongs to the terpene synthase family. Mg(2+) is required as a cofactor.

It carries out the reaction (2E,6E)-farnesyl diphosphate = 5-epi-alpha-selinene + diphosphate. Catalyzes the cyclization of farnesyl diphosphate (FPP) to the sesquiterpene germacrene A. The sequence is that of Germacrene A synthase from Nostoc punctiforme (strain ATCC 29133 / PCC 73102).